The primary structure comprises 638 residues: MINLSLYQTNSLSYTIIWMLFVIPSCVLSVDERQKHCSPTFRCGKQTDLYYPFWSPDREECGHPVFKVNCSGDFAEFTISTVKFHVLEMNYESRIIRLVRTEYLNNLCPWHPENRSINQEVLPFLQDTELGTFYYNCSGPTVDELANGYIRQLGCDEEVGGKSYFVSSPSHPGNRAILDGLSASCERNVDIPVSRSAMETTATNQSLEAIKKVLDVGFELGFNSDCSLCVASKGACGFNQSSKAFVCYCKDEPHEHTCGKMGIGIGLGCGFLGATLITVCLLCFFFQKRRTSHHLRPRDNNLKGLVQLKQYSYAEVRKITKLFSHTLGKGGFGTVYGGNLCDGRKVAVKILKDFKSNGEDFINEVASMSQTSHVNIVSLLGFCYEGSKRAIVYEFLENGSLDQFLSEKKSLNLDVSTLYRIALGVARGLDYLHHGCKTRIVHFDIKPQNILLDDTFCPKVSDFGLAKLCEKRESILSLLDARGTIGYIAPEVFSGMYGRVSHKSDVYSYGMLVLEMIGAKNKEIEETAASNSSSAYFPDWIYKNLENGEDTWKFGDEISREDKEVAKKMTLVGLWCIQPSPLNRPPMNRIVEMMEGSLDVLEVPPKPSIHYSAEPLPQLSSFSEENSIYTEVFIGSTS.

A signal peptide spans methionine 1–serine 29. Residues valine 30–glycine 264 lie on the Extracellular side of the membrane. 5 N-linked (GlcNAc...) asparagine glycosylation sites follow: asparagine 69, asparagine 114, asparagine 136, asparagine 204, and asparagine 239. Residues isoleucine 265 to phenylalanine 285 form a helical membrane-spanning segment. The Cytoplasmic segment spans residues phenylalanine 286 to serine 638. One can recognise a Protein kinase domain in the interval lysine 321–isoleucine 609. ATP contacts are provided by residues leucine 327–valine 335 and lysine 349. Tyrosine 393 carries the phosphotyrosine modification. The active-site Proton acceptor is aspartate 444. Threonine 484 bears the Phosphothreonine mark.

It belongs to the protein kinase superfamily. Ser/Thr protein kinase family.

The protein resides in the membrane. The enzyme catalyses L-seryl-[protein] + ATP = O-phospho-L-seryl-[protein] + ADP + H(+). It catalyses the reaction L-threonyl-[protein] + ATP = O-phospho-L-threonyl-[protein] + ADP + H(+). This Arabidopsis thaliana (Mouse-ear cress) protein is LEAF RUST 10 DISEASE-RESISTANCE LOCUS RECEPTOR-LIKE PROTEIN KINASE-like 2.1.